A 192-amino-acid polypeptide reads, in one-letter code: Segregation and condensation protein B (192 aa).

It belongs to the ScpB family. Homodimer. Homodimerization may be required to stabilize the binding of ScpA to the Smc head domains. Component of a cohesin-like complex composed of ScpA, ScpB and the Smc homodimer, in which ScpA and ScpB bind to the head domain of Smc. The presence of the three proteins is required for the association of the complex with DNA.

The protein localises to the cytoplasm. Participates in chromosomal partition during cell division. May act via the formation of a condensin-like complex containing Smc and ScpA that pull DNA away from mid-cell into both cell halves. This is Segregation and condensation protein B from Mycoplasma mobile (strain ATCC 43663 / 163K / NCTC 11711) (Mesomycoplasma mobile).